We begin with the raw amino-acid sequence, 120 residues long: Secreted RxLR effector protein RXLR-C26 (120 aa).

The signal sequence occupies residues 1-29; sequence MTGILCFPPFARFFMLLSGCAWLAGVSSG. The RxLR-dEER signature appears at 57-77; sequence RNLRGHINSAIIEANDTSEER. An N-linked (GlcNAc...) asparagine glycan is attached at asparagine 71.

The protein belongs to the RxLR effector family.

The protein resides in the secreted. It localises to the host cytoplasm. Its subcellular location is the host nucleus. Functionally, secreted effector that does not suppress pattern-triggered immunity (PTI) in plant host. This is Secreted RxLR effector protein RXLR-C26 from Plasmopara halstedii (Downy mildew of sunflower).